Here is a 119-residue protein sequence, read N- to C-terminus: Histone H1B, sperm (119 aa).

The region spanning 8 to 77 (THPPVATAVV…QNKGSFRVNK (70 aa)) is the H15 domain. A disordered region spans residues 76–119 (NKTALPKKKKAAKKPKAKKVKKPKSAAKKKTNRARAPKTKKNRN). Positions 80 to 119 (LPKKKKAAKKPKAKKVKKPKSAAKKKTNRARAPKTKKNRN) are enriched in basic residues.

This sequence belongs to the histone H1/H5 family.

It is found in the nucleus. The protein localises to the chromosome. Histones H1 are necessary for the condensation of nucleosome chains into higher-order structures. This chain is Histone H1B, sperm, found in Platynereis dumerilii (Dumeril's clam worm).